A 152-amino-acid chain; its full sequence is Deoxyuridine 5'-triphosphate nucleotidohydrolase (152 aa).

Residues 71–73, N84, 88–90, and M98 contribute to the substrate site; these read RSG and LID.

This sequence belongs to the dUTPase family. Requires Mg(2+) as cofactor.

The enzyme catalyses dUTP + H2O = dUMP + diphosphate + H(+). Its pathway is pyrimidine metabolism; dUMP biosynthesis; dUMP from dCTP (dUTP route): step 2/2. This enzyme is involved in nucleotide metabolism: it produces dUMP, the immediate precursor of thymidine nucleotides and it decreases the intracellular concentration of dUTP so that uracil cannot be incorporated into DNA. The sequence is that of Deoxyuridine 5'-triphosphate nucleotidohydrolase from Klebsiella pneumoniae subsp. pneumoniae (strain ATCC 700721 / MGH 78578).